The sequence spans 454 residues: Alpha-1,3-mannosyl-glycoprotein 4-beta-N-acetylglucosaminyltransferase C (454 aa).

Topologically, residues 1–6 are cytoplasmic; it reads MRCHLK. Residues 7–24 traverse the membrane as a helical; Signal-anchor for type II membrane protein segment; the sequence is KWVVVAAGLSILTSLYVY. Residues 25-454 lie on the Lumenal side of the membrane; the sequence is MQRAQSGNLK…VWTVKEDKTI (430 aa). Residues asparagine 58 and asparagine 189 are each glycosylated (N-linked (GlcNAc...) asparagine).

This sequence belongs to the glycosyltransferase 54 family. A divalent metal cation serves as cofactor.

The protein localises to the golgi apparatus membrane. It catalyses the reaction N(4)-{beta-D-GlcNAc-(1-&gt;2)-alpha-D-Man-(1-&gt;3)-[beta-D-GlcNAc-(1-&gt;2)-alpha-D-Man-(1-&gt;6)]-beta-D-Man-(1-&gt;4)-beta-D-GlcNAc-(1-&gt;4)-beta-D-GlcNAc}-L-asparaginyl-[protein] + UDP-N-acetyl-alpha-D-glucosamine = N(4)-{beta-D-GlcNAc-(1-&gt;2)-[beta-D-GlcNAc-(1-&gt;4)]-alpha-D-Man-(1-&gt;3)-[beta-D-GlcNAc-(1-&gt;2)-alpha-D-Man-(1-&gt;6)]-beta-D-Man-(1-&gt;4)-beta-D-GlcNAc-(1-&gt;4)-beta-D-GlcNAc}-L-asparaginyl-[protein] + UDP + H(+). It participates in protein modification; protein glycosylation. Functionally, glycosyltransferase that participates in the transfer of N-acetylglucosamine (GlcNAc) to the core mannose residues of N-linked glycans. Catalyzes the formation of the GlcNAcbeta1-4 branch on the GlcNAcbeta1-2Manalpha1-3 arm of the core structure of N-linked glycans. The chain is Alpha-1,3-mannosyl-glycoprotein 4-beta-N-acetylglucosaminyltransferase C (mgat4c) from Danio rerio (Zebrafish).